We begin with the raw amino-acid sequence, 135 residues long: Protein KRTCAP2 homolog (135 aa).

The next 4 helical transmembrane spans lie at 1–21 (MAVS…LLFA), 35–55 (PMAI…LTAI), 69–89 (TKLI…SGMV), and 93–113 (CITT…RISI).

This sequence belongs to the KRTCAP2 family. As to quaternary structure, component of the oligosaccharyltransferase (OST) complex.

The protein localises to the membrane. In terms of biological role, subunit of the oligosaccharyl transferase (OST) complex that catalyzes the initial transfer of a defined glycan (Glc(3)Man(9)GlcNAc(2) in eukaryotes) from the lipid carrier dolichol-pyrophosphate to an asparagine residue within an Asn-X-Ser/Thr consensus motif in nascent polypeptide chains, the first step in protein N-glycosylation. N-glycosylation occurs cotranslationally and the complex associates with the Sec61 complex at the channel-forming translocon complex that mediates protein translocation across the endoplasmic reticulum (ER). All subunits are required for a maximal enzyme activity. This is Protein KRTCAP2 homolog from Ixodes scapularis (Black-legged tick).